A 67-amino-acid chain; its full sequence is Probable Sec-independent protein translocase protein TatE (67 aa).

The chain crosses the membrane as a helical span at residues 1 to 21; that stretch reads MEGISIAKLLIIGALIVLLFG. The interval 46 to 67 is disordered; sequence EDTSATRTTAEDVPAERVVHKD.

This sequence belongs to the TatA/E family. TatE subfamily.

It localises to the cell inner membrane. In terms of biological role, part of the twin-arginine translocation (Tat) system that transports large folded proteins containing a characteristic twin-arginine motif in their signal peptide across membranes. TatE shares overlapping functions with TatA. This is Probable Sec-independent protein translocase protein TatE from Pantoea vagans (strain C9-1) (Pantoea agglomerans (strain C9-1)).